The following is a 319-amino-acid chain: Histone-lysine N-methyltransferase set5 (319 aa).

An SET domain is found at 4 to 141 (YETEIYKVVP…AGEEILTTYI (138 aa)). Residue S316 is modified to Phosphoserine. Position 318 is a phosphothreonine (T318).

The protein belongs to the class V-like SAM-binding methyltransferase superfamily.

It is found in the nucleus. The protein resides in the chromosome. Its subcellular location is the cytoplasm. The catalysed reaction is L-lysyl-[histone] + S-adenosyl-L-methionine = N(6)-methyl-L-lysyl-[histone] + S-adenosyl-L-homocysteine + H(+). In terms of biological role, histone methyltransferase that monomethylates 'Lys-5', 'Lys-8' and 'Lys-12' of histone H4 (H4K5me1, H4K8me1 and H4K12me1, respectively), thereby controlling gene expression and remodeling chromatin structures. Monomethylation of 'Lys-5' of histone H4 (H4K5me1) is required for subsequent acetylation and formation of N6-acetyl-N6-methyllysine (H4K5acme). This Schizosaccharomyces pombe (strain 972 / ATCC 24843) (Fission yeast) protein is Histone-lysine N-methyltransferase set5 (set5).